Consider the following 337-residue polypeptide: MASDRPRVLSGIQPTAGSFHLGNYLGAVRQWVALQESHDAFYMVVDLHAITVPQDPADLRANTRLAAAQLLAAGLDPERCTLFVQSHVPEHAQLAWIMNCLTGFGEASRMTQFKDKSAKQGADRASVGLFTYPVLQVADILLYQANEVPVGEDQRQHIELTRDLAERFNGRFGETFTVPKPYILKETAKIFDLQDPSIKMSKSASTPKGLINLLDEPKATAKKVKSAVTDTDTVIRYDAEHKPGISNLLTIYSTLTGTGIPELEEKYTGKGYGALKTDLAEVMVDFVTPFRERTQQYLDDPETLDSILAKGAEKARAVAAETLSQAYDRVGFLPAKH.

ATP is bound by residues Gln-13–Thr-15 and Gly-22–Asn-23. The 'HIGH' region signature appears at Pro-14–Asn-23. L-tryptophan is bound at residue Asp-139. Residues Gly-151–Asp-153, Ile-190, and Lys-199–Ser-203 each bind ATP. A 'KMSKS' region motif is present at residues Lys-199–Ser-203.

It belongs to the class-I aminoacyl-tRNA synthetase family. In terms of assembly, homodimer.

The protein resides in the cytoplasm. It carries out the reaction tRNA(Trp) + L-tryptophan + ATP = L-tryptophyl-tRNA(Trp) + AMP + diphosphate + H(+). Its function is as follows. Catalyzes the attachment of tryptophan to tRNA(Trp). The protein is Tryptophan--tRNA ligase 2 of Streptomyces avermitilis (strain ATCC 31267 / DSM 46492 / JCM 5070 / NBRC 14893 / NCIMB 12804 / NRRL 8165 / MA-4680).